A 661-amino-acid chain; its full sequence is Immunoglobulin-like domain-containing receptor 2 (661 aa).

Residues 1–35 (MPAFPTLDLDGKLGKMDRVVLGWTAVFWLTAMVEG) form the signal peptide. The region spanning 36–177 (LQVTVPDKKK…LEGKNEDSVE (142 aa)) is the Ig-like V-type domain. At 36 to 201 (LQVTVPDKKK…PSFAVEIMPE (166 aa)) the chain is on the lumenal side. Cys-57 and Cys-160 are joined by a disulfide. A helical transmembrane segment spans residues 202–222 (WVFVGLVILGIFLFFVLVGIC). The Cytoplasmic segment spans residues 223 to 661 (WCQCCPHSCC…DFPTRMSLVV (439 aa)). Disordered stretches follow at residues 288-310 (LMDK…HSVR), 410-429 (EDRE…MLSR), and 453-661 (QRSR…SLVV). 2 stretches are compositionally biased toward basic and acidic residues: residues 410–428 (EDRE…EMLS) and 463–478 (HEAR…ESRA). At Ser-487 the chain carries Phosphoserine. The segment covering 491–506 (YYGRGRSREPPGDGER) has biased composition (basic and acidic residues). The residue at position 559 (Arg-559) is an Omega-N-methylarginine. Ser-594 carries the phosphoserine modification. The span at 595-607 (EGEDEDDAADEDA) shows a compositional bias: acidic residues. A compositionally biased stretch (basic and acidic residues) spans 628 to 639 (RGRDLSFHSNSE).

This sequence belongs to the immunoglobulin superfamily. LISCH7 family. Interacts with MARVELD2 and OCLN. Interacts with P4HB and HSPA5; the interaction with HSPA5 stabilizes ILDR2 expression. Interacts (via C-terminus) with TRA2A, TRA2B and SRSF1. Expressed in epithelial tissues, mainly in liver, kidney and colon.

It is found in the endoplasmic reticulum membrane. The protein resides in the cell junction. The protein localises to the tight junction. Its subcellular location is the nucleus. Its function is as follows. May be involved in ER stress pathways with effects on lipid homeostasis and insulin secretion. With ILDR1 and LSR, involved in the maintain of the epithelial barrier function through the recruitment of MARVELD2/tricellulin to tricellular tight junctions. Also functions as a B7-like protein family member expressed on immune cells and inflamed tissue and with T-cell inhibitory activity. In the inner ear, may regulate alternative pre-mRNA splicing via binding to TRA2A, TRA2B and SRSF1. The protein is Immunoglobulin-like domain-containing receptor 2 of Mus musculus (Mouse).